Consider the following 2038-residue polypeptide: Homeotic protein female sterile (2038 aa).

Positions 34–140 constitute a Bromo 1 domain; the sequence is RNTNQLQYLI…KVFLQKIESM (107 aa). The disordered stretch occupies residues 145–284; it reads LELEPVTAKG…TTAMAGGVGG (140 aa). 2 stretches are compositionally biased toward low complexity: residues 177–209 and 268–279; these read GSGT…SGLQ and PGSTNTTTTAMA. A helical membrane pass occupies residues 330 to 350; that stretch reads AAVAAAAAAAAAAAAAAGGAA. The segment at 396-432 is disordered; it reads KGVKRKADTTTPTANAFESPYTQMDSKSAKIATRRES. Over residues 404–421 the composition is skewed to polar residues; sequence TTTPTANAFESPYTQMDS. The helical transmembrane segment at 451–471 threads the bilayer; the sequence is VSGVPGLGGLVAGGVAGVAVA. Residue serine 452 is modified to Phosphoserine. One can recognise a Bromo 2 domain in the interval 475-584; sequence EKLSDALKSC…DVFEMRYANI (110 aa). Disordered stretches follow at residues 590 to 655 and 677 to 735; these read ANAA…ERSA and EASA…SVPG. Over residues 593 to 619 the composition is skewed to basic residues; that stretch reads AHHHGHGHGHGHGHGHGHGHGHGHGHG. A compositionally biased stretch (acidic residues) spans 636 to 649; sequence SSEDSSDTENESNS. Residues 681 to 694 show a composition bias toward basic residues; the sequence is KKKAKKKLKEKKKS. Over residues 711–735 the composition is skewed to gly residues; sequence TGGGANAGGAGGPGSGGHGSVSVPG. 3 helical membrane passes run 750–770, 790–810, and 816–830; these read LNAL…AGGV, MAGG…AAGA, and AGTL…AAAG. 10 disordered regions span residues 832-858, 891-956, 1016-1139, 1217-1260, 1384-1416, 1502-1530, 1580-1616, 1645-1728, 1745-1918, and 1957-2023; these read GGTT…SGAG, AGAA…SYDE, CLRK…GGNL, AVSA…ATVA, QPAG…QQQQ, MQQM…QQQH, IESM…PNAA, WSSL…VAQA, AAAA…SGAI, and MESG…GQID. Residues 874-894 form a helical membrane-spanning segment; sequence GAAGAAAGAGSVGGVGGAGAA. Over residues 910–927 the composition is skewed to gly residues; that stretch reads GAGGGVGGANASAGGAGA. Positions 942–1024 constitute an NET domain; that stretch reads DSEEEDTAKP…SCLRKKTHKK (83 aa). The residue at position 943 (serine 943) is a Phosphoserine. Basic residues predominate over residues 1017–1027; that stretch reads LRKKTHKKPSG. Basic and acidic residues predominate over residues 1028 to 1046; the sequence is KSKDEQMAEKKQELEKRLQ. A compositionally biased stretch (low complexity) spans 1079–1100; the sequence is SSSSSSSDSSSSSSSDSSSSDS. Polar residues-rich tracts occupy residues 1121–1131 and 1222–1232; these read SNGSNVNNPSI and TGQQHNKNGPN. A compositionally biased stretch (low complexity) spans 1645 to 1665; sequence WSSLASANSPQSHTSSSSSSS. The residue at position 1653 (serine 1653) is a Phosphoserine. Over residues 1680-1708 the composition is skewed to basic and acidic residues; sequence KAKERDRLKLLEAAEKEKKNQKEAAEKEQ. Composition is skewed to low complexity over residues 1716–1728 and 1745–1760; these read SSSS…VAQA and AAAA…PSGG. Residues 1731–1751 form a helical membrane-spanning segment; the sequence is IAAATAAAAVTLGAAAAAALA. Positions 1776-1791 are enriched in basic and acidic residues; sequence GDRDRDRDRERERERS. A compositionally biased stretch (low complexity) spans 1800-1813; it reads NGNNSSNSANSNGP. Composition is skewed to gly residues over residues 1814–1828 and 1835–1856; these read GSAG…GGSG and PNSG…GGGP. The segment covering 1857-1884 has biased composition (low complexity); sequence ALLNAGSNSNSGVGSGGAASSNSNSSVG. Over residues 1885–1915 the composition is skewed to gly residues; that stretch reads GIVGSGGPGSNSQGSSGGGGGGPASGGGMGS. Residues 1939 to 1959 traverse the membrane as a helical segment; the sequence is VAAAVAAQAILAASPLGAMES. Residues serine 1980 and serine 1988 each carry the phosphoserine modification. The span at 1986-1997 shows a compositional bias: low complexity; it reads QSSPAQQSPQDR. A compositionally biased stretch (basic and acidic residues) spans 1998–2017; it reads AAAKRAEQRRAEQERRRREA.

It localises to the membrane. Its function is as follows. Required maternally for proper expression of other homeotic genes involved in pattern formation, such as Ubx. The protein is Homeotic protein female sterile (fs(1)h) of Drosophila melanogaster (Fruit fly).